A 569-amino-acid polypeptide reads, in one-letter code: 3-oxosteroid 1-dehydrogenase (569 aa).

Residue 10–39 (DVVVVGSGAAGMVAALTAAHQGLSTVVVEK) participates in FAD binding. The interval 127 to 148 (PGGKPTGRSVEPKPFDANKLGP) is disordered.

The protein belongs to the FAD-dependent oxidoreductase 2 family. 3-oxosteroid dehydrogenase subfamily. It depends on FAD as a cofactor.

The catalysed reaction is a 3-oxosteroid + A = a 3-oxo-Delta(1)-steroid + AH2. It carries out the reaction a 3-oxo-Delta(4)-steroid + A = a 3-oxo-Delta(1,4)-steroid + AH2. Catalyzes the elimination of the C-1 and C-2 hydrogen atoms of the A-ring from the polycyclic ring structure of 3-ketosteroids. Is also involved in the formation of 1,4-androstadiene-3,17-dione (ADD) from 4-androstene-3,17-dione (AD) to. The sequence is that of 3-oxosteroid 1-dehydrogenase (ksdD) from Mycolicibacterium smegmatis (strain ATCC 700084 / mc(2)155) (Mycobacterium smegmatis).